Here is a 350-residue protein sequence, read N- to C-terminus: MFNQLSDEQKMLKKLALLSGIKPCTASSMLFSFPYSQQKLIDASTQKLFDLFGKLRNTDRLKFLIEEAIDRGIDIDVQDKDGFTLLHKSINERDYNIAGFLLERKANPNIHDRDIVTPLNRIAGKPLSKTEEDFHMAKLLLQKGALTEPTDFSGWTPIQYAVFNEKIGIVELLIDYGANLDIIVPKGFYKGKNLIELVRAISSIFSDQSLNKQLQTLLKLATACQNNDFGLVDYSVKKENSDTEDDSVTKEDIEKFINHKISIKPSVKLLPKYLKELIRLKGFLETKEEFIKDNTIKRLEDNINSKSSLKYLLLSKIVESPSLYKFDVGMPEDLKESLEEHGLKLVGDID.

3 ANK repeats span residues 81 to 110, 114 to 151, and 153 to 182; these read DGFTLLHKSINERDYNIAGFLLERKANPNI, DIVTPLNRIAGKPLSKTEEDFHMAKLLLQKGALTEPTD, and SGWTPIQYAVFNEKIGIVELLIDYGANLDI.

The chain is Putative ankyrin repeat protein RBE_0589 from Rickettsia bellii (strain RML369-C).